A 217-amino-acid polypeptide reads, in one-letter code: Large ribosomal subunit protein uL1 (217 aa).

Belongs to the universal ribosomal protein uL1 family.

In Spodoptera frugiperda (Fall armyworm), this protein is Large ribosomal subunit protein uL1 (RpL10A).